The chain runs to 364 residues: Solute carrier family 35 member C2 (364 aa).

2 helical membrane passes run 14 to 34 (AALTLGLVLLYYCFSIGITFY) and 42 to 62 (FHFPLFMTMLHLAVIFLFSAL). The N-linked (GlcNAc...) asparagine glycan is linked to N102. A run of 7 helical transmembrane segments spans residues 104–124 (SFLYITVSLYTMTKSSAVLFI), 136–156 (LRAALVLVVLLIAGGLFMFTY), 166–186 (FALVLGASFIGGIRWTLTQIL), 202–222 (FHLQPLMFLGLFPLFAIFEGL), 238–258 (LLLWVLGSLLLGGILAFGLGF), 272–292 (LSIAGIFKEVCTLLLAAHLLG), and 295–315 (ISLLNWLGFALCLSGISLHVA). Phosphoserine occurs at positions 335 and 336.

Belongs to the TPT transporter family. SLC35C subfamily.

Its subcellular location is the golgi apparatus. The protein resides in the cis-Golgi network membrane. It localises to the endoplasmic reticulum-Golgi intermediate compartment membrane. Functionally, may play an important role in the cellular response to tissue hypoxia. May be either a GDP-fucose transporter that competes with SLC35C1 for GDP-fucose, or a factor that otherwise enhances the fucosylation of Notch and is required for optimal Notch signaling in mammalian cells. The polypeptide is Solute carrier family 35 member C2 (Slc35c2) (Mus musculus (Mouse)).